The sequence spans 249 residues: Probable calcium-binding protein CML12 (249 aa).

Basic and acidic residues predominate over residues 1–24; sequence MQSQRERPREDRVHEETRGADHAH. Positions 1–80 are disordered; the sequence is MQSQRERPRE…RKGKAPATAE (80 aa). The segment covering 30–56 has biased composition (low complexity); sequence AAAAASATATETATRTMSLHAGGVVVV. A compositionally biased stretch (basic and acidic residues) spans 57 to 70; that stretch reads DGKEKGKKEEGEGK. 4 consecutive EF-hand domains span residues 91–126, 128–163, 171–206, and 207–242; these read EQLRQLHEIFLRFDLDGDGSLTKLELAALLRSLGLR, AAGDEIHALIAAIDADGNGTVEFDELASSLADLILG, VDQAELAEAFRAFDRDGNGFISAAELARSMARMGHP, and ICYAELTDMMREADTDGDGLISFEEFTAIMAKSALD. Residues aspartate 104, aspartate 106, aspartate 108, serine 110, glutamate 115, aspartate 141, aspartate 143, asparagine 145, threonine 147, glutamate 152, aspartate 184, aspartate 186, asparagine 188, glutamate 195, aspartate 220, aspartate 222, aspartate 224, and glutamate 231 each contribute to the Ca(2+) site.

Potential calcium sensor. This Oryza sativa subsp. japonica (Rice) protein is Probable calcium-binding protein CML12 (CML12).